The chain runs to 1292 residues: HMG domain-containing protein 3 (1292 aa).

Positions 42 to 110 (TKKPRSAYLL…GLDPNSKLSA (69 aa)) form a DNA-binding region, HMG box. 3 disordered regions span residues 363–391 (SKGS…KLTL), 448–505 (VQPE…GRAR), and 562–588 (KQLG…NRTS). Positions 370–391 (RNQQPVTTEQNSSKENASKLTL) are enriched in polar residues. A compositionally biased stretch (low complexity) spans 467-478 (PTPSEGTSTSSP). Residues 562–572 (KQLGQPIQQPS) are compositionally biased toward polar residues.

Its subcellular location is the nucleus. This Homo sapiens (Human) protein is HMG domain-containing protein 3.